The following is a 547-amino-acid chain: Methionine--tRNA ligase (547 aa).

Positions 15–25 match the 'HIGH' region motif; it reads PYANGSLHLGH. Zn(2+) contacts are provided by Cys-146, Cys-149, Cys-159, and Cys-162. The 'KMSKS' region motif lies at 332–336; the sequence is KMSKS. ATP is bound at residue Lys-335.

The protein belongs to the class-I aminoacyl-tRNA synthetase family. MetG type 1 subfamily. As to quaternary structure, monomer. Zn(2+) serves as cofactor.

The protein localises to the cytoplasm. It catalyses the reaction tRNA(Met) + L-methionine + ATP = L-methionyl-tRNA(Met) + AMP + diphosphate. Functionally, is required not only for elongation of protein synthesis but also for the initiation of all mRNA translation through initiator tRNA(fMet) aminoacylation. This chain is Methionine--tRNA ligase, found in Baumannia cicadellinicola subsp. Homalodisca coagulata.